The sequence spans 593 residues: NADH-quinone oxidoreductase subunit C/D (593 aa).

The NADH dehydrogenase I subunit C stretch occupies residues 1–184 (MTADNAIFIP…DPYSLTLAKQ (184 aa)). Positions 208–593 (DYMFLNLGPN…IDFVMADVDR (386 aa)) are NADH dehydrogenase I subunit D.

In the N-terminal section; belongs to the complex I 30 kDa subunit family. It in the C-terminal section; belongs to the complex I 49 kDa subunit family. In terms of assembly, NDH-1 is composed of 13 different subunits. Subunits NuoB, CD, E, F, and G constitute the peripheral sector of the complex.

The protein resides in the cell inner membrane. The catalysed reaction is a quinone + NADH + 5 H(+)(in) = a quinol + NAD(+) + 4 H(+)(out). Functionally, NDH-1 shuttles electrons from NADH, via FMN and iron-sulfur (Fe-S) centers, to quinones in the respiratory chain. The immediate electron acceptor for the enzyme in this species is believed to be ubiquinone. Couples the redox reaction to proton translocation (for every two electrons transferred, four hydrogen ions are translocated across the cytoplasmic membrane), and thus conserves the redox energy in a proton gradient. The chain is NADH-quinone oxidoreductase subunit C/D from Pseudomonas putida (strain GB-1).